The chain runs to 759 residues: Arylphorin subunit C223 (759 aa).

The N-terminal stretch at 1-15 (MKIAIVLLAIVGLAA) is a signal peptide.

This sequence belongs to the hemocyanin family. Heterohexamer. In terms of tissue distribution, fat body.

Its subcellular location is the secreted. It localises to the extracellular space. In terms of biological role, arylphorin is a larval storage protein (LSP) which may serve as a storage protein used primarily as a source of aromatic amino acids for protein synthesis during metamorphosis. It is a constituent of the sclerotizing system of the cuticle, and serves as a carrier for ecdysteroid hormone. This chain is Arylphorin subunit C223, found in Calliphora vicina (Blue blowfly).